Consider the following 66-residue polypeptide: Conotoxin Cal6.38 (66 aa).

An N-terminal signal peptide occupies residues 1–22 (MKLTFVLIVAVLVLAVCNFTVA). Cystine bridges form between C38–C55, C45–C59, and C54–C64.

It belongs to the conotoxin O1 superfamily. In terms of tissue distribution, expressed by the venom duct.

Its subcellular location is the secreted. Functionally, probable neurotoxin. In Californiconus californicus (California cone), this protein is Conotoxin Cal6.38.